We begin with the raw amino-acid sequence, 190 residues long: NADH-dependent phenylglyoxylate dehydrogenase subunit gamma (190 aa).

As to quaternary structure, dimer of heteropentamers composed of an alpha (PadG), a beta (PadI), a gamma (PadE), a delta (PadF) and an epsilon (PadH) subunit.

It catalyses the reaction phenylglyoxylate + NAD(+) + CoA = benzoyl-CoA + CO2 + NADH. Its activity is regulated as follows. Activated by magnesium ions and thiamine diphosphate. Involved in the anaerobic metabolism of phenylalanine and phenylacetate. Catalyzes the oxidative decarboxylation of phenylglyoxylate to benzoyl-CoA and CO(2). It can also react slowly with 2-oxo-3-methylbutanoate and use different electron acceptors such as benzyl viologen, methyl viologen, FAD or FMN, but NAD seems to be the physiological electron acceptor. Also catalyzes an isotope exchange between CO(2) and the carboxyl group which proves partial or complete reversibility of the oxidative decarboxylation reaction. This chain is NADH-dependent phenylglyoxylate dehydrogenase subunit gamma (padE), found in Aromatoleum evansii (Azoarcus evansii).